Reading from the N-terminus, the 443-residue chain is Thymidine phosphorylase (443 aa).

This sequence belongs to the thymidine/pyrimidine-nucleoside phosphorylase family. Homodimer.

It catalyses the reaction thymidine + phosphate = 2-deoxy-alpha-D-ribose 1-phosphate + thymine. Its pathway is pyrimidine metabolism; dTMP biosynthesis via salvage pathway; dTMP from thymine: step 1/2. Functionally, the enzymes which catalyze the reversible phosphorolysis of pyrimidine nucleosides are involved in the degradation of these compounds and in their utilization as carbon and energy sources, or in the rescue of pyrimidine bases for nucleotide synthesis. The sequence is that of Thymidine phosphorylase from Shewanella oneidensis (strain ATCC 700550 / JCM 31522 / CIP 106686 / LMG 19005 / NCIMB 14063 / MR-1).